The chain runs to 462 residues: NAD-capped RNA hydrolase NUDT12 (462 aa).

3 ANK repeats span residues 11-40, 45-74, and 78-98; these read EIVT…SLLN, NGWT…DRSI, and SRQT…ANLL. Residue lysine 185 is modified to N6-succinyllysine. Zn(2+) contacts are provided by cysteine 284 and cysteine 287. Residue lysine 292 is modified to N6-succinyllysine. Zn(2+) is bound by residues cysteine 302 and cysteine 307. Substrate is bound by residues tyrosine 318, 354–356, glutamate 370, glutamate 374, and glutamate 415; that span reads AGF. One can recognise a Nudix hydrolase domain in the interval 319–453; sequence PRVDPVVIMQ…SRAIAHQLIK (135 aa). Residues alanine 354, glutamate 370, glutamate 374, and glutamate 415 each coordinate Mg(2+). A Nudix box motif is present at residues 355–376; it reads GFIEPGETIEDAVRREVEEESG. The short motif at 460–462 is the Microbody targeting signal element; the sequence is PNL.

This sequence belongs to the Nudix hydrolase family. NudC subfamily. As to quaternary structure, homodimer. Homodimerization is essential for its catalytic activity and protein stability. Interacts (via ANK repeats) with BLMH. The cofactor is Mg(2+). Zn(2+) is required as a cofactor.

The protein localises to the cytoplasm. The protein resides in the peroxisome. It localises to the cytoplasmic granule. The enzyme catalyses a 5'-end NAD(+)-phospho-ribonucleoside in mRNA + H2O = a 5'-end phospho-adenosine-phospho-ribonucleoside in mRNA + beta-nicotinamide D-ribonucleotide + 2 H(+). The catalysed reaction is NAD(+) + H2O = beta-nicotinamide D-ribonucleotide + AMP + 2 H(+). It carries out the reaction NADH + H2O = reduced beta-nicotinamide D-ribonucleotide + AMP + 2 H(+). It catalyses the reaction NADPH + H2O = reduced beta-nicotinamide D-ribonucleotide + adenosine 2',5'-bisphosphate + 2 H(+). MRNA decapping enzyme that specifically removes the nicotinamide adenine dinucleotide (NAD) cap from a subset of mRNAs by hydrolyzing the diphosphate linkage to produce nicotinamide mononucleotide (NMN) and 5' monophosphate mRNA. The NAD-cap is present at the 5'-end of some RNAs; in contrast to the canonical N7 methylguanosine (m7G) cap, the NAD cap promotes mRNA decay. Preferentially acts on NAD-capped transcripts in response to nutrient stress. Also acts on free nicotinamide adenine dinucleotide molecules: hydrolyzes NAD(H) into NMN(H) and AMP, and NADPH into NMNH and 2',5'-ADP. May act to regulate the concentration of peroxisomal nicotinamide nucleotide cofactors required for oxidative metabolism in this organelle. Regulates the levels of circadian clock components PER1, PER2, PER3 and CRY2 in the liver. The polypeptide is NAD-capped RNA hydrolase NUDT12 (Macaca fascicularis (Crab-eating macaque)).